Here is a 1647-residue protein sequence, read N- to C-terminus: Ras GTPase-activating-like protein IQG1 (1647 aa).

A disordered region spans residues 18–51 (DTTATTTTTTTSNVLQPSNRLNSPTKFNRKSLDN). Over residues 19-28 (TTATTTTTTT) the composition is skewed to low complexity. Positions 29 to 43 (SNVLQPSNRLNSPTK) are enriched in polar residues. The residue at position 48 (Ser48) is a Phosphoserine. Phosphothreonine is present on residues Thr66, Thr72, and Thr82. A phosphoserine mark is found at Ser83, Ser91, and Ser139. The span at 143 to 162 (FNTQSNVHTPLKQLNQPIGT) shows a compositional bias: polar residues. The tract at residues 143–175 (FNTQSNVHTPLKQLNQPIGTPSSSSLSPAKNAS) is disordered. The segment covering 163–175 (PSSSSLSPAKNAS) has biased composition (low complexity). Residues Ser165, Ser167, and Ser169 each carry the phosphoserine modification. The Calponin-homology (CH) domain maps to 184–291 (LCRIEAIKQW…FCLHALSYIL (108 aa)). A disordered region spans residues 326 to 427 (PLPNFSSADT…STSNAKLELH (102 aa)). Low complexity predominate over residues 342–355 (TSNNNSSTTSATAA). Thr367 is subject to Phosphothreonine. A compositionally biased stretch (low complexity) spans 368-379 (PSPLKRPQQLQK). The residue at position 369 (Ser369) is a Phosphoserine. Composition is skewed to basic and acidic residues over residues 380–392 (KQLE…KPEL) and 402–413 (ISRDDPFTDRVD). Phosphoserine occurs at positions 433 and 440. IQ domains lie at 467-478 (FQSLARGAVFRY), 528-539 (LQSIIRKNFVIN), 556-567 (LQSLIRGKLTRD), 586-597 (FQSLVRMKSIYS), 616-627 (LQSIARSQLYHR), 642-653 (IQSIIRRNAVIE), 672-683 (LQSIARGGVART), 734-745 (VQTLFRGVLSRY), and 764-775 (LQSVARGKLMRG). The stretch at 841-919 (LSDLKDLIIE…KKIELWQTLF (79 aa)) forms a coiled coil. The region spanning 958 to 1223 (PVRDSSITYH…DTVKSIISQA (266 aa)) is the Ras-GAP domain. Phosphoserine occurs at positions 1064, 1068, 1088, 1383, and 1385.

Interacts with myosin MYO1 and its light chain MLC1. Interacts with BNI1. Interacts with BNR1. Interacts with CLB2. Interacts with CLB4. Interacts with CDC28. Hyperphosphorylated. Phosphorylation is cell cycle-dependent and peaks at the time of cytokinesis. Contains 21 consensus sites for cyclin-dependent kinases (CDKs). At least some of them are phosphorylated by the CLB2-CDC28 kinase complex. Mutation of 15 of the phosphorylation sites to Ala caused both premature assembly and delayed disassembly of the actomyosin ring, blocked interaction with the actin-nucleating proteins BNI1 and BNR1, and resulted in defects in cytokinesis.

Its subcellular location is the bud neck. Its function is as follows. Required for the assembly and the contraction of the actomyosin ring at the bud neck during cytokinesis. The chain is Ras GTPase-activating-like protein IQG1 (IQG1) from Candida albicans (strain SC5314 / ATCC MYA-2876) (Yeast).